The chain runs to 176 residues: Large ribosomal subunit protein uL6 (176 aa).

It belongs to the universal ribosomal protein uL6 family. Part of the 50S ribosomal subunit.

This protein binds to the 23S rRNA, and is important in its secondary structure. It is located near the subunit interface in the base of the L7/L12 stalk, and near the tRNA binding site of the peptidyltransferase center. This is Large ribosomal subunit protein uL6 from Burkholderia ambifaria (strain MC40-6).